The following is a 436-amino-acid chain: Transcriptional regulator VdtR (436 aa).

Positions C17–C44 form a DNA-binding region, zn(2)-C6 fungal-type. 2 disordered regions span residues R51–G147 and T173–D192. Over residues S125–Q141 the composition is skewed to polar residues. A compositionally biased stretch (basic and acidic residues) spans A174 to D192.

It is found in the nucleus. Its function is as follows. Transcription factor that regulates expression of the viriditoxin biosynthesis cluster and viriditoxin synthesis. In Byssochlamys spectabilis (Paecilomyces variotii), this protein is Transcriptional regulator VdtR.